Here is a 49-residue protein sequence, read N- to C-terminus: Large ribosomal subunit protein bL33B (49 aa).

Belongs to the bacterial ribosomal protein bL33 family.

The chain is Large ribosomal subunit protein bL33B from Lacticaseibacillus paracasei (strain ATCC 334 / BCRC 17002 / CCUG 31169 / CIP 107868 / KCTC 3260 / NRRL B-441) (Lactobacillus paracasei).